The sequence spans 162 residues: Peptidyl-prolyl cis-trans isomerase-like 1 (162 aa).

Residues 1–155 (MTTNIVLETT…EEVKIVKARV (155 aa)) form the PPIase cyclophilin-type domain.

It belongs to the cyclophilin-type PPIase family. PPIL1 subfamily.

The enzyme catalyses [protein]-peptidylproline (omega=180) = [protein]-peptidylproline (omega=0). In terms of biological role, PPIases accelerate the folding of proteins. It catalyzes the cis-trans isomerization of proline imidic peptide bonds in oligopeptides. The polypeptide is Peptidyl-prolyl cis-trans isomerase-like 1 (CYP1) (Gibberella zeae (strain ATCC MYA-4620 / CBS 123657 / FGSC 9075 / NRRL 31084 / PH-1) (Wheat head blight fungus)).